A 399-amino-acid chain; its full sequence is Elongation factor Tu (399 aa).

The tr-type G domain occupies 10–209; it reads KPHVNIGTIG…AVDDYIPTPA (200 aa). A G1 region spans residues 19–26; it reads GHVDHGKT. 19–26 provides a ligand contact to GTP; that stretch reads GHVDHGKT. Threonine 26 contacts Mg(2+). Residues 60–64 are G2; that stretch reads GITIA. A G3 region spans residues 81-84; it reads DCPG. GTP-binding positions include 81–85 and 136–139; these read DCPGH and NKAD. The interval 136-139 is G4; sequence NKAD. The tract at residues 174 to 176 is G5; the sequence is SAL.

This sequence belongs to the TRAFAC class translation factor GTPase superfamily. Classic translation factor GTPase family. EF-Tu/EF-1A subfamily. In terms of assembly, monomer.

The protein localises to the cytoplasm. It catalyses the reaction GTP + H2O = GDP + phosphate + H(+). Functionally, GTP hydrolase that promotes the GTP-dependent binding of aminoacyl-tRNA to the A-site of ribosomes during protein biosynthesis. In Campylobacter lari (strain RM2100 / D67 / ATCC BAA-1060), this protein is Elongation factor Tu.